The chain runs to 179 residues: MAKLHDYYKDEVVQKLMTQFGYNSVMQVPRVEKITLNMGVGEAIADKKLLDNAAADLAAISGQKPLITKARKSVAGFKIRQGYPIGCKVTLRGERMWEFLERLISIAVPRIRDFRGLSAKSFDGRGNYSMGVREQIIFPEIDYDKVDRVRGLDITITTTAKSDDEGRALLAAFNFPFRK.

It belongs to the universal ribosomal protein uL5 family. Part of the 50S ribosomal subunit; part of the 5S rRNA/L5/L18/L25 subcomplex. Contacts the 5S rRNA and the P site tRNA. Forms a bridge to the 30S subunit in the 70S ribosome.

In terms of biological role, this is one of the proteins that bind and probably mediate the attachment of the 5S RNA into the large ribosomal subunit, where it forms part of the central protuberance. In the 70S ribosome it contacts protein S13 of the 30S subunit (bridge B1b), connecting the 2 subunits; this bridge is implicated in subunit movement. Contacts the P site tRNA; the 5S rRNA and some of its associated proteins might help stabilize positioning of ribosome-bound tRNAs. This chain is Large ribosomal subunit protein uL5, found in Photorhabdus laumondii subsp. laumondii (strain DSM 15139 / CIP 105565 / TT01) (Photorhabdus luminescens subsp. laumondii).